The following is a 405-amino-acid chain: Argininosuccinate synthase (405 aa).

Residues 13-21 (AYSGGLDTS) and Ala-40 each bind ATP. The L-citrulline site is built by Tyr-91 and Ser-96. Gly-121 contacts ATP. L-aspartate-binding residues include Thr-123, Asn-127, and Asp-128. Asn-127 contributes to the L-citrulline binding site. L-citrulline contacts are provided by Arg-131, Ser-182, Ser-191, Glu-267, and Tyr-279.

The protein belongs to the argininosuccinate synthase family. Type 1 subfamily. In terms of assembly, homotetramer.

It is found in the cytoplasm. The catalysed reaction is L-citrulline + L-aspartate + ATP = 2-(N(omega)-L-arginino)succinate + AMP + diphosphate + H(+). It participates in amino-acid biosynthesis; L-arginine biosynthesis; L-arginine from L-ornithine and carbamoyl phosphate: step 2/3. In Rhizobium meliloti (strain 1021) (Ensifer meliloti), this protein is Argininosuccinate synthase.